Here is a 427-residue protein sequence, read N- to C-terminus: Probable fatty acid methyltransferase Rv3720 (427 aa).

Residues 167–168 (YT), 202–210 (LLDVGCGWG), and 227–232 (TLSAEQ) each bind S-adenosyl-L-methionine.

The protein belongs to the CFA/CMAS family.

Functionally, may be a S-adenosylmethionine-dependent methyltransferase involved in fatty acid metabolism. This Mycobacterium tuberculosis (strain ATCC 25618 / H37Rv) protein is Probable fatty acid methyltransferase Rv3720.